The sequence spans 683 residues: Elongation factor G-like protein (683 aa).

A tr-type G domain is found at 5–267 (QNVRSAALIG…YLGDIGVSPE (263 aa)). GTP contacts are provided by residues 14 to 21 (GHNGSGKS), 73 to 77 (DTPGF), and 127 to 130 (NQMD).

It belongs to the TRAFAC class translation factor GTPase superfamily. Classic translation factor GTPase family. EF-G/EF-2 subfamily.

The sequence is that of Elongation factor G-like protein from Thermotoga maritima (strain ATCC 43589 / DSM 3109 / JCM 10099 / NBRC 100826 / MSB8).